A 399-amino-acid chain; its full sequence is Bombesin receptor subtype-3 (399 aa).

Topologically, residues 1–41 (MSQKQPQSPNQTLISITNDTESSSSVVSNDTTNKGWTGDNS) are extracellular. Residues N10 and N18 are each glycosylated (N-linked (GlcNAc...) asparagine). The chain crosses the membrane as a helical span at residues 42-63 (PGIEALCAIYITYAVIISVGIL). Topologically, residues 64–82 (GNAILIKVFFKTKSMQTVP) are cytoplasmic. The chain crosses the membrane as a helical span at residues 83 to 103 (NIFITSLALGDLLLLLTCVPV). The Extracellular segment spans residues 104–121 (DATHYLAEGWLFGRIGCK). A disulfide bridge connects residues C120 and C203. Residues 122-143 (VLSFIRLTSVGVSVFTLTILSA) traverse the membrane as a helical segment. Topologically, residues 144 to 163 (DRYKAVVKPLERQPSNAILK) are cytoplasmic. The helical transmembrane segment at 164–184 (TCAKAGCIWIMSMIFALPEAI) threads the bilayer. At 185 to 220 (FSNVHTLRDPNKNMTSEWCAFYPVSEKLLQEIHALL) the chain is on the extracellular side. A helical transmembrane segment spans residues 221–241 (SFLVFYIIPLSIISVYYSLIA). Residues 242 to 272 (RTLYKSTLNIPTEEQSHARKQVESRKRIAKT) are Cytoplasmic-facing. The chain crosses the membrane as a helical span at residues 273-293 (VLVLVALFALCWLPNHLLNLY). Over 294 to 313 (HSFTHKAYEDSSAIHFIVTI) the chain is Extracellular. A helical membrane pass occupies residues 314-333 (FSRVLAFSNSCVNPFALYWL). Residues 334–399 (SKTFQKQFKA…RPMKKEENRV (66 aa)) are Cytoplasmic-facing. A lipid anchor (S-palmitoyl cysteine) is attached at C347.

This sequence belongs to the G-protein coupled receptor 1 family. As to quaternary structure, interacts with C6orf89. As to expression, mainly in uteri of pregnant animals.

The protein resides in the cell membrane. Its function is as follows. Role in sperm cell division, maturation, or function. The relative order of ligand affinity is GRP = neuromedin-C &gt;&gt; neuromedin-B. This receptor mediates its action by association with G proteins that activate a phosphatidylinositol-calcium second messenger system. This chain is Bombesin receptor subtype-3 (BRS3), found in Cavia porcellus (Guinea pig).